Here is a 439-residue protein sequence, read N- to C-terminus: GTPase Der (439 aa).

EngA-type G domains follow at residues 4 to 168 (PIVA…KDDE) and 177 to 352 (INIA…DNYT). GTP contacts are provided by residues 10 to 17 (GRPNVGKS), 57 to 61 (DTGGI), 120 to 123 (NKID), 183 to 190 (GKPNVGKS), 230 to 234 (DTAGL), and 295 to 298 (NKWD). In terms of domain architecture, KH-like spans 353 to 437 (KRVKTGVLND…GIKLEFRERK (85 aa)).

The protein belongs to the TRAFAC class TrmE-Era-EngA-EngB-Septin-like GTPase superfamily. EngA (Der) GTPase family. Associates with the 50S ribosomal subunit.

Its function is as follows. GTPase that plays an essential role in the late steps of ribosome biogenesis. The polypeptide is GTPase Der (Clostridium botulinum (strain Okra / Type B1)).